The following is a 355-amino-acid chain: N6-Methyl-AMP deaminase (355 aa).

The Zn(2+) site is built by His24 and His26. N(6)-methyl-AMP-binding positions include His26, Asn28, His74, 106–109 (STPR), Asp148, and Gly181. His208 serves as a coordination point for Zn(2+). N(6)-methyl-AMP is bound by residues Glu211, Asp293, and Asp294. The Proton donor role is filled by Glu211. A Zn(2+)-binding site is contributed by Asp293.

The protein belongs to the metallo-dependent hydrolases superfamily. Adenosine and AMP deaminases family. Monomer. Requires Zn(2+) as cofactor.

The catalysed reaction is N(6)-methyl-AMP + H2O + H(+) = IMP + methylamine. Functionally, catalyzes the hydrolysis of the free cytosolic methylated adenosine nucleotide N(6)-methyl-AMP (N6-mAMP) to produce inositol monophosphate (IMP) and methylamine. Is required for the catabolism of cytosolic N6-mAMP, which is derived from the degradation of mRNA containing N6-methylated adenine (m6A). Catalyzes the removal of different alkyl groups not only from N6-substituted purine or 2-aminopurine nucleoside monophosphates but also from O6-substituted compounds in vitro. This is N6-Methyl-AMP deaminase from Homo sapiens (Human).